The following is a 723-amino-acid chain: Transcription factor E2F7 (723 aa).

The interval 121–146 (AEEEEEEELDDSCQYEALDESERRPS) is disordered. The segment covering 122-139 (EEEEEEELDDSCQYEALD) has biased composition (acidic residues). DNA-binding regions lie at residues 147–216 (RKQK…VWHG) and 264–349 (RKDK…KWIG). Polar residues-rich tracts occupy residues 356–370 (SSNS…SNSG) and 395–405 (LISSAPSTPHR). 5 disordered regions span residues 356–379 (SSNS…KMAR), 395–417 (LISS…YSRK), 489–546 (SLRK…ASFG), 650–689 (EHHG…SKSF), and 702–723 (QSAA…TAAN). Residues 494–503 (ERSEEDDHQT) are compositionally biased toward basic and acidic residues. Positions 520–535 (SESLSSSTRRSPVCSP) are enriched in low complexity.

The protein belongs to the E2F/DP family. In terms of assembly, homodimer and heterodimer: mainly forms homodimers and, to a lesser extent, heterodimers with e2f8.

It is found in the nucleus. Functionally, atypical E2F transcription factor that participates in various processes such as angiogenesis and polyploidization of specialized cells. Mainly acts as a transcription repressor that binds DNA independently of DP proteins and specifically recognizes the E2 recognition site 5'-TTTC[CG]CGC-3'. Directly represses transcription of classical E2F transcription factors such as e2f1. Acts as a regulator of S-phase by recognizing and binding the E2-related site 5'-TTCCCGCC-3' and mediating repression of G1/S-regulated genes. Acts as a promoter of sprouting angiogenesis, possibly by acting as a transcription activator and promoting expression of vegfa. The chain is Transcription factor E2F7 (e2f7) from Danio rerio (Zebrafish).